A 750-amino-acid polypeptide reads, in one-letter code: Photosystem I P700 chlorophyll a apoprotein A1 (750 aa).

Transmembrane regions (helical) follow at residues 70–93 (VFSA…FHGA), 156–179 (LYCT…FHYH), 195–219 (LNHH…HVSL), 291–309 (IAHH…GHMY), 346–369 (WHAQ…HHMY), 385–411 (LSLF…IFMV), 433–455 (AIIS…LYIH), and 531–549 (FLVH…LILL). [4Fe-4S] cluster-binding residues include C573 and C582. The next 2 helical transmembrane spans lie at 589–610 (HVFL…HFSW) and 664–686 (LSAY…MFLF). H675 serves as a coordination point for chlorophyll a'. The chlorophyll a site is built by M683 and Y691. W692 provides a ligand contact to phylloquinone. A helical membrane pass occupies residues 724–744 (AVGVTHYLLGGIATTWAFFLA).

It belongs to the PsaA/PsaB family. As to quaternary structure, the PsaA/B heterodimer binds the P700 chlorophyll special pair and subsequent electron acceptors. PSI consists of a core antenna complex that captures photons, and an electron transfer chain that converts photonic excitation into a charge separation. The eukaryotic PSI reaction center is composed of at least 11 subunits. Requires P700 is a chlorophyll a/chlorophyll a' dimer, A0 is one or more chlorophyll a, A1 is one or both phylloquinones and FX is a shared 4Fe-4S iron-sulfur center. as cofactor.

The protein localises to the plastid. It localises to the chloroplast thylakoid membrane. The catalysed reaction is reduced [plastocyanin] + hnu + oxidized [2Fe-2S]-[ferredoxin] = oxidized [plastocyanin] + reduced [2Fe-2S]-[ferredoxin]. Its function is as follows. PsaA and PsaB bind P700, the primary electron donor of photosystem I (PSI), as well as the electron acceptors A0, A1 and FX. PSI is a plastocyanin-ferredoxin oxidoreductase, converting photonic excitation into a charge separation, which transfers an electron from the donor P700 chlorophyll pair to the spectroscopically characterized acceptors A0, A1, FX, FA and FB in turn. Oxidized P700 is reduced on the lumenal side of the thylakoid membrane by plastocyanin. The sequence is that of Photosystem I P700 chlorophyll a apoprotein A1 from Saccharum hybrid (Sugarcane).